The primary structure comprises 815 residues: Bifunctional aspartokinase/homoserine dehydrogenase (815 aa).

The aspartokinase stretch occupies residues 1–249; it reads MRVLKFGGTS…VPDARLLPTL (249 aa). The segment at 250-470 is interface; the sequence is SYREAMELSY…NNKKVVDMFL (221 aa). ACT domains follow at residues 320–392 and 401–478; these read VSGP…PIEV and VVGD…GVGG. The interval 471 to 815 is homoserine dehydrogenase; that stretch reads VGVGGVGGEL…FADILRTLQH (345 aa). Val-473, Gly-475, Val-476, Ala-504, and Thr-555 together coordinate NAD(+). Residue Val-476 coordinates NADP(+). Val-476 contributes to the NADPH binding site. NADP(+) is bound at residue Thr-555. Residues Thr-555, Ser-556, and Lys-579 each coordinate NADPH. Residue Lys-579 participates in NADP(+) binding. Na(+) contacts are provided by Glu-606, Val-609, Ala-611, and Leu-613. The NADP(+) site is built by Gly-664 and Glu-667. L-homoserine is bound by residues Glu-667 and Asp-678. Lys-682 (proton donor) is an active-site residue. Gly-797 is an NAD(+) binding site. NADP(+) is bound at residue Gly-797. Position 797 (Gly-797) interacts with NADPH.

In the N-terminal section; belongs to the aspartokinase family. The protein in the C-terminal section; belongs to the homoserine dehydrogenase family. In terms of assembly, homotetramer. The cofactor is a metal cation.

It catalyses the reaction L-homoserine + NADP(+) = L-aspartate 4-semialdehyde + NADPH + H(+). The catalysed reaction is L-homoserine + NAD(+) = L-aspartate 4-semialdehyde + NADH + H(+). The enzyme catalyses L-aspartate + ATP = 4-phospho-L-aspartate + ADP. It participates in amino-acid biosynthesis; L-lysine biosynthesis via DAP pathway; (S)-tetrahydrodipicolinate from L-aspartate: step 1/4. It functions in the pathway amino-acid biosynthesis; L-methionine biosynthesis via de novo pathway; L-homoserine from L-aspartate: step 1/3. Its pathway is amino-acid biosynthesis; L-methionine biosynthesis via de novo pathway; L-homoserine from L-aspartate: step 3/3. The protein operates within amino-acid biosynthesis; L-threonine biosynthesis; L-threonine from L-aspartate: step 1/5. It participates in amino-acid biosynthesis; L-threonine biosynthesis; L-threonine from L-aspartate: step 3/5. Functionally, bifunctional aspartate kinase and homoserine dehydrogenase that catalyzes the first and the third steps toward the synthesis of lysine, methionine and threonine from aspartate. The chain is Bifunctional aspartokinase/homoserine dehydrogenase (thrA) from Haemophilus influenzae (strain ATCC 51907 / DSM 11121 / KW20 / Rd).